The following is a 335-amino-acid chain: uncharacterized protein (335 aa).

Positions 1-21 (MDKKARAHTVIVCLVGALSLA) are cleaved as a signal peptide. A lipid anchor (N-palmitoyl cysteine) is attached at C22. C22 is lipidated: S-diacylglycerol cysteine.

Its subcellular location is the cell membrane. This is an uncharacterized protein from Treponema pallidum (strain Nichols).